Consider the following 461-residue polypeptide: Peptidyl-prolyl cis-trans isomerase-like 4 (461 aa).

Residues 1-171 (MSVLLETSLG…KDIRIRHTVI (171 aa)) form the PPIase cyclophilin-type domain. Residues 248 to 326 (NVLFVCKLNP…HRIHVDFSQS (79 aa)) form the RRM domain. Positions 372-461 (NYNMVFDKND…DDRYRDRRRR (90 aa)) are disordered. Composition is skewed to basic and acidic residues over residues 378–392 (DKND…ERSY) and 400–461 (NYRD…RRRR).

This sequence belongs to the cyclophilin-type PPIase family. PPIL4 subfamily.

The protein localises to the nucleus. It catalyses the reaction [protein]-peptidylproline (omega=180) = [protein]-peptidylproline (omega=0). PPIases accelerate the folding of proteins. It catalyzes the cis-trans isomerization of proline imidic peptide bonds in oligopeptides. The polypeptide is Peptidyl-prolyl cis-trans isomerase-like 4 (cyp6) (Emericella nidulans (strain FGSC A4 / ATCC 38163 / CBS 112.46 / NRRL 194 / M139) (Aspergillus nidulans)).